Consider the following 427-residue polypeptide: Histidinol dehydrogenase (427 aa).

Positions 125, 186, and 209 each coordinate NAD(+). Positions 234, 256, and 259 each coordinate substrate. Positions 256 and 259 each coordinate Zn(2+). Active-site proton acceptor residues include E325 and H326. Substrate is bound by residues H326, D359, E413, and H419. D359 lines the Zn(2+) pocket. H419 lines the Zn(2+) pocket.

This sequence belongs to the histidinol dehydrogenase family. Zn(2+) serves as cofactor.

It carries out the reaction L-histidinol + 2 NAD(+) + H2O = L-histidine + 2 NADH + 3 H(+). Its pathway is amino-acid biosynthesis; L-histidine biosynthesis; L-histidine from 5-phospho-alpha-D-ribose 1-diphosphate: step 9/9. Functionally, catalyzes the sequential NAD-dependent oxidations of L-histidinol to L-histidinaldehyde and then to L-histidine. This chain is Histidinol dehydrogenase, found in Leptospira interrogans serogroup Icterohaemorrhagiae serovar Lai (strain 56601).